A 261-amino-acid polypeptide reads, in one-letter code: 5'-nucleotidase SurE (261 aa).

A divalent metal cation-binding residues include Asp8, Asp9, Ser40, and Asn94.

This sequence belongs to the SurE nucleotidase family. Requires a divalent metal cation as cofactor.

The protein localises to the cytoplasm. The enzyme catalyses a ribonucleoside 5'-phosphate + H2O = a ribonucleoside + phosphate. Nucleotidase that shows phosphatase activity on nucleoside 5'-monophosphates. The polypeptide is 5'-nucleotidase SurE (Anaplasma marginale (strain Florida)).